The following is a 1040-amino-acid chain: Chromatin modification-related protein rik1 (1040 aa).

The protein belongs to the DDB1 family. Component of the Clr4 methyltransferase complex (ClrC) composed of at least clr4, rik1, pcu4, rbx1, raf1 and raf2. The cullin pcu4, rik1, raf1, raf2 and the ring-box protein rbx1 are components of an E3 ubiquitin ligase, whose activity is essential for heterochromatin assembly.

Its subcellular location is the nucleus. It localises to the cytoplasm. The protein localises to the cytoskeleton. The protein resides in the microtubule organizing center. It is found in the spindle pole body. Its subcellular location is the chromosome. In terms of biological role, component of the Clr4 methyltransferase complex (ClrC) which contributes to the establishment of heterochromatin by specifically methylating histone H3 to form H3K9me. ClrC preferentially ubiquitylates H3K14 and ClrC-mediated H3 ubiquitination promotes clr4 methyltransferase activity for the methylation of H3K9. H3K9me represents a specific tag for epigenetic transcriptional repression by recruiting swi6/HP1 to methylated histones which leads to transcriptional silencing within centromeric heterochromatin, telomeric regions and at the silent mating-type loci. Rik1 is involved in the RNAi-mediated targeting of ClrC to heterochromatic repeat elements. Rik1 also has a function in meiotic telomere clustering. The chain is Chromatin modification-related protein rik1 (rik1) from Schizosaccharomyces pombe (strain 972 / ATCC 24843) (Fission yeast).